The primary structure comprises 335 residues: Olfactory receptor 10R2 (335 aa).

At 1 to 45 (MPQILIFTYLNMFYFFPPLQILAENLTMVTEFLLLGFSSLGEIQL) the chain is on the extracellular side. An N-linked (GlcNAc...) asparagine glycan is attached at N25. A helical transmembrane segment spans residues 46–66 (ALFVVFLFLYLVILSGNVTII). The Cytoplasmic portion of the chain corresponds to 67–74 (SVIHLDKS). The chain crosses the membrane as a helical span at residues 75 to 95 (LHTPMYFFLGILSTSETFYTF). Residues 96–119 (VILPKMLINLLSVARTISFNCCAL) lie on the Extracellular side of the membrane. A disulfide bridge links C117 with C209. A helical membrane pass occupies residues 120 to 140 (QMFFFLGFAITNCLLLGVMGY). Residues 141 to 159 (DRYAAICHPLHYPTLMSWQ) are Cytoplasmic-facing. Residues 160-180 (VCGKLAAACAIGGFLASLTVV) traverse the membrane as a helical segment. The Extracellular portion of the chain corresponds to 181-217 (NLVFSLPFCSANKVNHYFCDISAVILLACTNTDVNEF). A helical membrane pass occupies residues 218–237 (VIFICGVLVLVVPFLFICVS). Topologically, residues 238–257 (YLCILRTILKIPSAEGRRKA) are cytoplasmic. The helical transmembrane segment at 258-278 (FSTCASHLSVVIVHYGCASFI) threads the bilayer. Topologically, residues 279–291 (YLRPTANYVSNKD) are extracellular. A helical transmembrane segment spans residues 292–312 (RLVTVTYTIVTPLLNPMVYSL). At 313–335 (RNKDVQLAIRKVLGKKGSLKLYN) the chain is on the cytoplasmic side.

Belongs to the G-protein coupled receptor 1 family.

Its subcellular location is the cell membrane. In terms of biological role, odorant receptor. The sequence is that of Olfactory receptor 10R2 (OR10R2) from Homo sapiens (Human).